A 416-amino-acid polypeptide reads, in one-letter code: Gamma-glutamyl phosphate reductase (416 aa).

Belongs to the gamma-glutamyl phosphate reductase family.

The protein resides in the cytoplasm. The enzyme catalyses L-glutamate 5-semialdehyde + phosphate + NADP(+) = L-glutamyl 5-phosphate + NADPH + H(+). The protein operates within amino-acid biosynthesis; L-proline biosynthesis; L-glutamate 5-semialdehyde from L-glutamate: step 2/2. Catalyzes the NADPH-dependent reduction of L-glutamate 5-phosphate into L-glutamate 5-semialdehyde and phosphate. The product spontaneously undergoes cyclization to form 1-pyrroline-5-carboxylate. In Leptospira borgpetersenii serovar Hardjo-bovis (strain JB197), this protein is Gamma-glutamyl phosphate reductase.